Reading from the N-terminus, the 126-residue chain is Small ribosomal subunit protein uS12 (126 aa).

Residues 1 to 28 are disordered; it reads MPTINQLVRKGRQSETTKSKSPALQDCP. Asp-89 is modified (3-methylthioaspartic acid). Positions 103-126 are disordered; sequence DTQGVKDRKQARSKYGAKRAKAAK. Residues 113 to 126 are compositionally biased toward basic residues; that stretch reads ARSKYGAKRAKAAK.

It belongs to the universal ribosomal protein uS12 family. Part of the 30S ribosomal subunit. Contacts proteins S8 and S17. May interact with IF1 in the 30S initiation complex.

Its function is as follows. With S4 and S5 plays an important role in translational accuracy. In terms of biological role, interacts with and stabilizes bases of the 16S rRNA that are involved in tRNA selection in the A site and with the mRNA backbone. Located at the interface of the 30S and 50S subunits, it traverses the body of the 30S subunit contacting proteins on the other side and probably holding the rRNA structure together. The combined cluster of proteins S8, S12 and S17 appears to hold together the shoulder and platform of the 30S subunit. This Burkholderia orbicola (strain MC0-3) protein is Small ribosomal subunit protein uS12.